Reading from the N-terminus, the 99-residue chain is A-type ATP synthase subunit F (99 aa).

It belongs to the V-ATPase F subunit family. In terms of assembly, has multiple subunits with at least A(3), B(3), C, D, E, F, H, I and proteolipid K(x).

Its subcellular location is the cell membrane. Component of the A-type ATP synthase that produces ATP from ADP in the presence of a proton gradient across the membrane. This is A-type ATP synthase subunit F from Methanococcoides burtonii (strain DSM 6242 / NBRC 107633 / OCM 468 / ACE-M).